The primary structure comprises 110 residues: Nucleoid-associated protein SYO3AOP1_1366 (110 aa).

Belongs to the YbaB/EbfC family. In terms of assembly, homodimer.

Its subcellular location is the cytoplasm. The protein localises to the nucleoid. In terms of biological role, binds to DNA and alters its conformation. May be involved in regulation of gene expression, nucleoid organization and DNA protection. In Sulfurihydrogenibium sp. (strain YO3AOP1), this protein is Nucleoid-associated protein SYO3AOP1_1366.